Here is a 193-residue protein sequence, read N- to C-terminus: Acyl carrier protein phosphodiesterase (193 aa).

It belongs to the AcpH family.

The catalysed reaction is holo-[ACP] + H2O = apo-[ACP] + (R)-4'-phosphopantetheine + H(+). Its function is as follows. Converts holo-ACP to apo-ACP by hydrolytic cleavage of the phosphopantetheine prosthetic group from ACP. In Shigella boydii serotype 4 (strain Sb227), this protein is Acyl carrier protein phosphodiesterase.